The primary structure comprises 162 residues: Nucleotide-binding protein ABSDF0503 (162 aa).

Belongs to the YajQ family.

Nucleotide-binding protein. This Acinetobacter baumannii (strain SDF) protein is Nucleotide-binding protein ABSDF0503.